Consider the following 205-residue polypeptide: Ypt/Rab-type GTPase ypt7 (205 aa).

GTP is bound by residues 17 to 23, 33 to 40, glycine 66, 125 to 128, and 157 to 159; these read SGVGKTS, FSASYKAT, NKID, and SAK. Positions 37–45 match the Effector region motif; it reads YKATIGADF. Residues cysteine 203 and cysteine 205 are each lipidated (S-geranylgeranyl cysteine). Residue cysteine 205 is modified to Cysteine methyl ester.

The protein belongs to the small GTPase superfamily. Rab family. As to quaternary structure, interacts with the Rab GDP dissociation inhibitor GDI1.

It is found in the vacuole. With respect to regulation, rab activation is generally mediated by a guanine exchange factor (GEF), while inactivation through hydrolysis of bound GTP is catalyzed by a GTPase activating protein (GAP). Its function is as follows. Ypt/Rab-type GTPases are key regulators of membrane trafficking and intracellular vesicular transport. They act as molecular switches that convert between GTP-bound and GDP-bound states, and regulate virtually all steps of membrane traffic from the formation of the transport vesicle at the donor membrane to its fusion at the target membrane. In the GDP-bound state, Ypt proteins are predominantly cytosolic, solubilized through the interaction with a GDP dissociation inhibitor (GDI). In the GTP-bound state, the proteins are membrane bound and interact with specific effector proteins that select cargo, promote vesicle movement, or verify the correct site of fusion. Required for fungal morphogenesis, vacuole fusion, autophagy, stress resistance and pathogenicity. The protein is Ypt/Rab-type GTPase ypt7 of Pyricularia oryzae (strain 70-15 / ATCC MYA-4617 / FGSC 8958) (Rice blast fungus).